The chain runs to 185 residues: ATP synthase subunit b 2 (185 aa).

Residues 1–24 are disordered; the sequence is MADSHGNAKGATAHTEAGGGHKAP. Residues 34-56 form a helical membrane-spanning segment; the sequence is ASQLVSLTIAFVALYLISSRLAL.

It belongs to the ATPase B chain family. F-type ATPases have 2 components, F(1) - the catalytic core - and F(0) - the membrane proton channel. F(1) has five subunits: alpha(3), beta(3), gamma(1), delta(1), epsilon(1). F(0) has three main subunits: a(1), b(2) and c(10-14). The alpha and beta chains form an alternating ring which encloses part of the gamma chain. F(1) is attached to F(0) by a central stalk formed by the gamma and epsilon chains, while a peripheral stalk is formed by the delta and b chains.

The protein resides in the cell inner membrane. Its function is as follows. F(1)F(0) ATP synthase produces ATP from ADP in the presence of a proton or sodium gradient. F-type ATPases consist of two structural domains, F(1) containing the extramembraneous catalytic core and F(0) containing the membrane proton channel, linked together by a central stalk and a peripheral stalk. During catalysis, ATP synthesis in the catalytic domain of F(1) is coupled via a rotary mechanism of the central stalk subunits to proton translocation. Functionally, component of the F(0) channel, it forms part of the peripheral stalk, linking F(1) to F(0). The b'-subunit is a diverged and duplicated form of b found in plants and photosynthetic bacteria. The polypeptide is ATP synthase subunit b 2 (atpF2) (Nitrobacter hamburgensis (strain DSM 10229 / NCIMB 13809 / X14)).